The chain runs to 461 residues: Argininosuccinate lyase (461 aa).

It belongs to the lyase 1 family. Argininosuccinate lyase subfamily.

It is found in the cytoplasm. It carries out the reaction 2-(N(omega)-L-arginino)succinate = fumarate + L-arginine. It participates in amino-acid biosynthesis; L-arginine biosynthesis; L-arginine from L-ornithine and carbamoyl phosphate: step 3/3. In Nitrosomonas europaea (strain ATCC 19718 / CIP 103999 / KCTC 2705 / NBRC 14298), this protein is Argininosuccinate lyase.